The primary structure comprises 303 residues: UDP-3-O-acyl-N-acetylglucosamine deacetylase (303 aa).

H78, H237, and D241 together coordinate Zn(2+). The Proton donor role is filled by H264.

The protein belongs to the LpxC family. Zn(2+) is required as a cofactor.

It catalyses the reaction a UDP-3-O-[(3R)-3-hydroxyacyl]-N-acetyl-alpha-D-glucosamine + H2O = a UDP-3-O-[(3R)-3-hydroxyacyl]-alpha-D-glucosamine + acetate. Its pathway is glycolipid biosynthesis; lipid IV(A) biosynthesis; lipid IV(A) from (3R)-3-hydroxytetradecanoyl-[acyl-carrier-protein] and UDP-N-acetyl-alpha-D-glucosamine: step 2/6. Catalyzes the hydrolysis of UDP-3-O-myristoyl-N-acetylglucosamine to form UDP-3-O-myristoylglucosamine and acetate, the committed step in lipid A biosynthesis. This is UDP-3-O-acyl-N-acetylglucosamine deacetylase from Pseudomonas fluorescens (strain ATCC BAA-477 / NRRL B-23932 / Pf-5).